We begin with the raw amino-acid sequence, 385 residues long: 1-deoxy-D-xylulose 5-phosphate reductoisomerase (385 aa).

NADPH contacts are provided by T10, G11, S12, I13, K37, and N124. 1-deoxy-D-xylulose 5-phosphate is bound at residue K125. Residue E126 participates in NADPH binding. Position 150 (D150) interacts with Mn(2+). Residues S151, E152, S176, and H199 each coordinate 1-deoxy-D-xylulose 5-phosphate. E152 lines the Mn(2+) pocket. G205 contributes to the NADPH binding site. The 1-deoxy-D-xylulose 5-phosphate site is built by S212, N217, K218, and E221. E221 serves as a coordination point for Mn(2+).

It belongs to the DXR family. Requires Mg(2+) as cofactor. Mn(2+) serves as cofactor.

It carries out the reaction 2-C-methyl-D-erythritol 4-phosphate + NADP(+) = 1-deoxy-D-xylulose 5-phosphate + NADPH + H(+). It functions in the pathway isoprenoid biosynthesis; isopentenyl diphosphate biosynthesis via DXP pathway; isopentenyl diphosphate from 1-deoxy-D-xylulose 5-phosphate: step 1/6. Catalyzes the NADPH-dependent rearrangement and reduction of 1-deoxy-D-xylulose-5-phosphate (DXP) to 2-C-methyl-D-erythritol 4-phosphate (MEP). The chain is 1-deoxy-D-xylulose 5-phosphate reductoisomerase from Clostridium botulinum (strain Langeland / NCTC 10281 / Type F).